A 341-amino-acid polypeptide reads, in one-letter code: Glyceraldehyde-3-phosphate dehydrogenase 2 (341 aa).

Residues 12-13, R78, and T120 each bind NAD(+); that span reads RI. D-glyceraldehyde 3-phosphate-binding positions include 152–154 and T183; that span reads SCT. The active-site Nucleophile is C153. Residue N184 coordinates NAD(+). D-glyceraldehyde 3-phosphate is bound by residues R198, 211–212, and R234; that span reads TG. N313 serves as a coordination point for NAD(+).

Belongs to the glyceraldehyde-3-phosphate dehydrogenase family. As to quaternary structure, homotetramer.

It is found in the cytoplasm. The enzyme catalyses D-glyceraldehyde 3-phosphate + phosphate + NAD(+) = (2R)-3-phospho-glyceroyl phosphate + NADH + H(+). Its pathway is carbohydrate degradation; glycolysis; pyruvate from D-glyceraldehyde 3-phosphate: step 1/5. Its function is as follows. Catalyzes the oxidative phosphorylation of glyceraldehyde 3-phosphate (G3P) to 1,3-bisphosphoglycerate (BPG) using the cofactor NAD. The first reaction step involves the formation of a hemiacetal intermediate between G3P and a cysteine residue, and this hemiacetal intermediate is then oxidized to a thioester, with concomitant reduction of NAD to NADH. The reduced NADH is then exchanged with the second NAD, and the thioester is attacked by a nucleophilic inorganic phosphate to produce BPG. The protein is Glyceraldehyde-3-phosphate dehydrogenase 2 (gapA2) of Staphylococcus epidermidis (strain ATCC 12228 / FDA PCI 1200).